The primary structure comprises 366 residues: tRNA/tmRNA (uracil-C(5))-methyltransferase (366 aa).

Residues Gln190, Tyr218, Asn223, Glu239, and Asp299 each coordinate S-adenosyl-L-methionine. Cys324 functions as the Nucleophile in the catalytic mechanism. Glu358 (proton acceptor) is an active-site residue.

Belongs to the class I-like SAM-binding methyltransferase superfamily. RNA M5U methyltransferase family. TrmA subfamily.

It catalyses the reaction uridine(54) in tRNA + S-adenosyl-L-methionine = 5-methyluridine(54) in tRNA + S-adenosyl-L-homocysteine + H(+). It carries out the reaction uridine(341) in tmRNA + S-adenosyl-L-methionine = 5-methyluridine(341) in tmRNA + S-adenosyl-L-homocysteine + H(+). Functionally, dual-specificity methyltransferase that catalyzes the formation of 5-methyluridine at position 54 (m5U54) in all tRNAs, and that of position 341 (m5U341) in tmRNA (transfer-mRNA). The chain is tRNA/tmRNA (uracil-C(5))-methyltransferase from Shigella dysenteriae serotype 1 (strain Sd197).